A 293-amino-acid polypeptide reads, in one-letter code: Plant cysteine oxidase 1 (293 aa).

Fe cation contacts are provided by H148, H150, and H211. Residues 250 to 293 (SEDDDVLSSEEEKEGYAWLQERDDNPEDHTNVVGALYRGPKVED) are disordered. Residues 251–262 (EDDDVLSSEEEK) show a composition bias toward acidic residues. The span at 269-279 (QERDDNPEDHT) shows a compositional bias: basic and acidic residues.

It belongs to the cysteine dioxygenase family. Fe(2+) serves as cofactor.

It is found in the nucleus. Its subcellular location is the cytoplasm. It carries out the reaction L-cysteine + O2 = 3-sulfino-L-alanine + H(+). Catalyzes the oxidation of N-terminal cysteine residues (N-Cys), thus preparing the protein for N-end rule pathway-mediated proteasomal degradation, upstream of the N-end rule enzymes ATE1, ATE2 and PRT6. Controls the preparation of the group VII ethylene response factor (ERF-VII) proteins for degradation via the 26S proteasome N-end rule pathway. Acts as an oxygen sensor that controls the stability of ERF-VII proteins, which are stabilized in flooding-induced hypoxia, and regulate transcriptional adaptation to these adverse conditions. Not active on Cys located inside or at the C-terminus of a peptide. Acts redundantly with PCO2 to repress the anaerobic response. This Arabidopsis thaliana (Mouse-ear cress) protein is Plant cysteine oxidase 1.